A 349-amino-acid polypeptide reads, in one-letter code: Holliday junction branch migration complex subunit RuvB (349 aa).

The tract at residues 1-181 (MDDRILTSVN…FGVLCPMEFY (181 aa)) is large ATPase domain (RuvB-L). Residues L20, R21, G62, K65, T66, T67, 128 to 130 (EDY), R171, Y181, and R218 contribute to the ATP site. Position 66 (T66) interacts with Mg(2+). The tract at residues 182–252 (NDEELKEIIV…SAKKALNLLE (71 aa)) is small ATPAse domain (RuvB-S). The segment at 255–349 (DEGFDSIDNK…DQCSFFKKEK (95 aa)) is head domain (RuvB-H). The DNA site is built by R310 and R315.

The protein belongs to the RuvB family. In terms of assembly, homohexamer. Forms an RuvA(8)-RuvB(12)-Holliday junction (HJ) complex. HJ DNA is sandwiched between 2 RuvA tetramers; dsDNA enters through RuvA and exits via RuvB. An RuvB hexamer assembles on each DNA strand where it exits the tetramer. Each RuvB hexamer is contacted by two RuvA subunits (via domain III) on 2 adjacent RuvB subunits; this complex drives branch migration. In the full resolvosome a probable DNA-RuvA(4)-RuvB(12)-RuvC(2) complex forms which resolves the HJ.

The protein localises to the cytoplasm. The catalysed reaction is ATP + H2O = ADP + phosphate + H(+). In terms of biological role, the RuvA-RuvB-RuvC complex processes Holliday junction (HJ) DNA during genetic recombination and DNA repair, while the RuvA-RuvB complex plays an important role in the rescue of blocked DNA replication forks via replication fork reversal (RFR). RuvA specifically binds to HJ cruciform DNA, conferring on it an open structure. The RuvB hexamer acts as an ATP-dependent pump, pulling dsDNA into and through the RuvAB complex. RuvB forms 2 homohexamers on either side of HJ DNA bound by 1 or 2 RuvA tetramers; 4 subunits per hexamer contact DNA at a time. Coordinated motions by a converter formed by DNA-disengaged RuvB subunits stimulates ATP hydrolysis and nucleotide exchange. Immobilization of the converter enables RuvB to convert the ATP-contained energy into a lever motion, pulling 2 nucleotides of DNA out of the RuvA tetramer per ATP hydrolyzed, thus driving DNA branch migration. The RuvB motors rotate together with the DNA substrate, which together with the progressing nucleotide cycle form the mechanistic basis for DNA recombination by continuous HJ branch migration. Branch migration allows RuvC to scan DNA until it finds its consensus sequence, where it cleaves and resolves cruciform DNA. This is Holliday junction branch migration complex subunit RuvB from Clostridium acetobutylicum (strain ATCC 824 / DSM 792 / JCM 1419 / IAM 19013 / LMG 5710 / NBRC 13948 / NRRL B-527 / VKM B-1787 / 2291 / W).